Here is a 310-residue protein sequence, read N- to C-terminus: Ribosomal RNA small subunit methyltransferase H (310 aa).

Residues 33–35 (GGH), D52, F79, D98, and Q105 each bind S-adenosyl-L-methionine.

Belongs to the methyltransferase superfamily. RsmH family.

The protein resides in the cytoplasm. It carries out the reaction cytidine(1402) in 16S rRNA + S-adenosyl-L-methionine = N(4)-methylcytidine(1402) in 16S rRNA + S-adenosyl-L-homocysteine + H(+). Specifically methylates the N4 position of cytidine in position 1402 (C1402) of 16S rRNA. This Campylobacter jejuni (strain RM1221) protein is Ribosomal RNA small subunit methyltransferase H.